Here is a 235-residue protein sequence, read N- to C-terminus: Orotidine 5'-phosphate decarboxylase (235 aa).

Substrate-binding positions include Asp-10, Lys-32, 59-68, Thr-123, Arg-184, Gln-193, Gly-213, and Arg-214; that span reads DLKLHDIPNT. Lys-61 (proton donor) is an active-site residue.

This sequence belongs to the OMP decarboxylase family. Type 1 subfamily. Homodimer.

It carries out the reaction orotidine 5'-phosphate + H(+) = UMP + CO2. It participates in pyrimidine metabolism; UMP biosynthesis via de novo pathway; UMP from orotate: step 2/2. In terms of biological role, catalyzes the decarboxylation of orotidine 5'-monophosphate (OMP) to uridine 5'-monophosphate (UMP). This Paramagnetospirillum magneticum (strain ATCC 700264 / AMB-1) (Magnetospirillum magneticum) protein is Orotidine 5'-phosphate decarboxylase.